We begin with the raw amino-acid sequence, 252 residues long: MTTIDLNSDLGESYGSWVMGNDVAVLDLVSSANIACGFHAGDATVLFKTVRAAHARHVRIGAHIGYNDIAGFGRRNLDVAHDDLVAETIYQIGAIQAAAKASGAVVEYVKPHGALYNTIAVDEAQAAAVIEGIKLVNPELSLMALAGSQIVEQARAAGLQVEQETFADRAYTADGQLVSRKLPGAVLHDPETAARQALAFATGQPITAITGESVLVDANSICVHGDNPQALALVEKIVTTLAAHEVQVSHAR.

The protein belongs to the LamB/PxpA family. As to quaternary structure, forms a complex composed of PxpA, PxpB and PxpC.

It carries out the reaction 5-oxo-L-proline + ATP + 2 H2O = L-glutamate + ADP + phosphate + H(+). Catalyzes the cleavage of 5-oxoproline to form L-glutamate coupled to the hydrolysis of ATP to ADP and inorganic phosphate. The chain is 5-oxoprolinase subunit A from Corynebacterium glutamicum (strain R).